A 389-amino-acid polypeptide reads, in one-letter code: Spore coat polysaccharide biosynthesis protein SpsC (389 aa).

Lys187 is subject to N6-(pyridoxal phosphate)lysine.

The protein belongs to the DegT/DnrJ/EryC1 family. It depends on pyridoxal 5'-phosphate as a cofactor.

Its pathway is spore coat biogenesis; spore coat polysaccharide biosynthesis. In Bacillus subtilis (strain 168), this protein is Spore coat polysaccharide biosynthesis protein SpsC (spsC).